A 66-amino-acid polypeptide reads, in one-letter code: Large ribosomal subunit protein uL29 (66 aa).

Belongs to the universal ribosomal protein uL29 family.

The sequence is that of Large ribosomal subunit protein uL29 from Thermosipho africanus (strain TCF52B).